Here is a 29-residue protein sequence, read N- to C-terminus: Varv peptide D (29 aa).

The cyclopeptide (Gly-Asn) cross-link spans 1-29 (GLPICGETCVGGSCNTPGCSCSWPVCTRN). Intrachain disulfides connect cysteine 5–cysteine 19, cysteine 9–cysteine 21, and cysteine 14–cysteine 26.

This is a cyclic peptide.

Functionally, probably participates in a plant defense mechanism. This is Varv peptide D from Viola arvensis (European field pansy).